Consider the following 458-residue polypeptide: uncharacterized protein (458 aa).

12 helical membrane passes run 26 to 46, 47 to 67, 95 to 115, 125 to 145, 160 to 180, 208 to 228, 251 to 271, 278 to 298, 342 to 362, 365 to 385, 409 to 429, and 432 to 452; these read LIAI…KSIH, FAGP…FLIM, AAFI…MADL, WLPG…LLIM, FALI…VMIF, GFIL…LVGL, VLLF…WDII, FVQV…NFVV, ALFF…IMPE, FTLI…ITVI, PFTN…LALA, and TRVS…IYKV.

This sequence belongs to the amino acid-polyamine-organocation (APC) superfamily.

The protein localises to the cell membrane. Functionally, probable amino-acid or metabolite transport protein. This is an uncharacterized protein from Bacillus subtilis (strain 168).